We begin with the raw amino-acid sequence, 776 residues long: Reticulon-1 (776 aa).

4 disordered regions span residues 1 to 103, 136 to 168, 204 to 244, and 285 to 580; these read MAAP…GEGS, ISESPEELGTPGSSLPDVPGIESRGLFSSDSGI, EVKH…EPAP, and LTEI…APPP. The segment covering 204 to 240 has biased composition (basic and acidic residues); sequence EVKHQEQNHPELEDKDLDFKNKDTDISIKPEGVREPD. Serine 327 bears the Phosphoserine mark. Low complexity predominate over residues 328–341; the sequence is PGSITPPSSGTEPS. Residues serine 350, serine 352, and serine 487 each carry the phosphoserine modification. Residues 497 to 511 are compositionally biased toward basic and acidic residues; that stretch reads AIREETGVRAEERAP. The Reticulon domain occupies 589-776; it reads AIDLLYWRDI…KIPGAKRHAE (188 aa). The next 2 membrane-spanning stretches (helical) occupy residues 603–623 and 705–725; these read IVFGSFLLLLFSLTQFSVVSV and FAVLMWLLTYVGALFNGLTLL.

As to quaternary structure, interacts with NDRG1. Interacts with BACE1. Interacts with TMEM33. Phosphorylated.

The protein localises to the endoplasmic reticulum membrane. It localises to the golgi apparatus membrane. Its function is as follows. Inhibits amyloid precursor protein processing, probably by blocking BACE1 activity. The chain is Reticulon-1 (RTN1) from Pan troglodytes (Chimpanzee).